Consider the following 305-residue polypeptide: Secreted mono- and diacylglycerol lipase A (305 aa).

A signal peptide spans 1–26; the sequence is MRLSFFTALSAVASLGYALPGKLQSR. Disulfide bonds link Cys62/Cys67 and Cys129/Cys132. Catalysis depends on Ser171, which acts as the Nucleophile. Residue Asp225 is the Charge relay system of the active site. Asn251 carries an N-linked (GlcNAc...) asparagine glycan. The Charge relay system role is filled by His285. The propeptide at 303 to 305 is removed in mature form; it reads KRV.

It belongs to the AB hydrolase superfamily. Lipase family. Class 3 subfamily. In terms of processing, multiple forms of this lipase are due to the presence of different carbohydrates, which may contribute to the stability of this lipase but not to the enzyme activity.

The protein resides in the secreted. The enzyme catalyses a monoacylglycerol + H2O = glycerol + a fatty acid + H(+). It catalyses the reaction a diacylglycerol + H2O = a monoacylglycerol + a fatty acid + H(+). Both Fe(3+) and Hg(2+) inhibit the activity significantly. Secreted lipase strictly specific to mono- and diacylglycerol, but not triacylglycerol. Hydrolyzes long-chain monoacylglycerols most efficiently with the highest activities observed on 1- and 3- monopalmitoyl-sn-glycerol or 1-monostearoyl-rac-glycerol. Prefers to attack alpha positions to beta positions of monoacylglycerol, but shows no stereospecificity on mono- and diacylglycerol. This Penicillium camembertii protein is Secreted mono- and diacylglycerol lipase A.